The following is a 209-amino-acid chain: Uracil phosphoribosyltransferase (209 aa).

5-phospho-alpha-D-ribose 1-diphosphate-binding positions include Arg-79, Arg-104, and 131 to 139 (DPMLATGGS). Uracil is bound by residues Ile-194 and 199-201 (GDA). Asp-200 provides a ligand contact to 5-phospho-alpha-D-ribose 1-diphosphate.

The protein belongs to the UPRTase family. Homodimer. Mg(2+) serves as cofactor.

The enzyme catalyses UMP + diphosphate = 5-phospho-alpha-D-ribose 1-diphosphate + uracil. It functions in the pathway pyrimidine metabolism; UMP biosynthesis via salvage pathway; UMP from uracil: step 1/1. With respect to regulation, allosterically activated by GTP. Its function is as follows. Catalyzes the conversion of uracil and 5-phospho-alpha-D-ribose 1-diphosphate (PRPP) to UMP and diphosphate. The protein is Uracil phosphoribosyltransferase of Bacillus caldolyticus.